A 246-amino-acid polypeptide reads, in one-letter code: 5'-nucleotidase SurE (246 aa).

A divalent metal cation-binding residues include D8, D9, S39, and N91.

It belongs to the SurE nucleotidase family. A divalent metal cation serves as cofactor.

The protein localises to the cytoplasm. The catalysed reaction is a ribonucleoside 5'-phosphate + H2O = a ribonucleoside + phosphate. Functionally, nucleotidase that shows phosphatase activity on nucleoside 5'-monophosphates. The chain is 5'-nucleotidase SurE from Mannheimia succiniciproducens (strain KCTC 0769BP / MBEL55E).